A 489-amino-acid chain; its full sequence is MLAPVLMVVGTASSVGKSTLVSALCRIAARRGIRVAPFKAQNMSNNAAVTANGEEIARSIAVQAAAAKLTPSVQMNPILIKPEGQRRSQIIVQGRPWQTLEAIDYWQRKQLLWEIVTNSLDQLRQAYDLVIAEGAGSPVELNLKAHDITNMRVATYAQAQTLLVGDIDVGGIFAAMLGTLMLLEPEERQLIAGLIVNRFRGDPDLFTDGIQILEQRSNKPVLGVVPWLPQLGLPEEDAVALERPDQTTNNAALTIGVIQLPAIANFDDFDPLAQEQGVAVRYINQPHELQHCQALILPGTKHTLAARQWLTEQGFDQAIQQFQGPIVGICGGYQLLGQQIDDPEAVEGIGGSMAGLGLLPITTIFQRHKQTRQVQALSNLPWAKAYPLAGYEIHMGRTELLADQPAFSIQQAESTHADGCMRANGKVWGCYIHGIFANTEFRQAWLSRLGWQVQSAIQPIDPFERLADHVEACLEPNLLTKLLGQEIRD.

The GATase cobBQ-type domain maps to 252–441 (ALTIGVIQLP…IHGIFANTEF (190 aa)). The active-site Nucleophile is the C330. H433 is an active-site residue.

It belongs to the CobB/CobQ family. CobQ subfamily.

Its pathway is cofactor biosynthesis; adenosylcobalamin biosynthesis. In terms of biological role, catalyzes amidations at positions B, D, E, and G on adenosylcobyrinic A,C-diamide. NH(2) groups are provided by glutamine, and one molecule of ATP is hydrogenolyzed for each amidation. The chain is Cobyric acid synthase from Herpetosiphon aurantiacus (strain ATCC 23779 / DSM 785 / 114-95).